A 157-amino-acid polypeptide reads, in one-letter code: SsrA-binding protein (157 aa).

The interval 132–157 is disordered; sequence KLHDKRETEKKRDWSREKGRLLRSRG. The span at 135 to 151 shows a compositional bias: basic and acidic residues; that stretch reads DKRETEKKRDWSREKGR.

The protein belongs to the SmpB family.

It is found in the cytoplasm. In terms of biological role, required for rescue of stalled ribosomes mediated by trans-translation. Binds to transfer-messenger RNA (tmRNA), required for stable association of tmRNA with ribosomes. tmRNA and SmpB together mimic tRNA shape, replacing the anticodon stem-loop with SmpB. tmRNA is encoded by the ssrA gene; the 2 termini fold to resemble tRNA(Ala) and it encodes a 'tag peptide', a short internal open reading frame. During trans-translation Ala-aminoacylated tmRNA acts like a tRNA, entering the A-site of stalled ribosomes, displacing the stalled mRNA. The ribosome then switches to translate the ORF on the tmRNA; the nascent peptide is terminated with the 'tag peptide' encoded by the tmRNA and targeted for degradation. The ribosome is freed to recommence translation, which seems to be the essential function of trans-translation. The protein is SsrA-binding protein of Rhodopseudomonas palustris (strain ATCC BAA-98 / CGA009).